The primary structure comprises 934 residues: Translation initiation factor IF-2 (934 aa).

The disordered stretch occupies residues 54–323; that stretch reads AQESKPTTPP…KRQKRNEYEA (270 aa). Low complexity-rich tracts occupy residues 80–154, 185–197, 206–231, and 238–250; these read PKPG…AGKP, RGGA…PRPG, GQAP…PGAA, and RPSP…TPSP. Residues 260 to 303 show a composition bias toward gly residues; that stretch reads GFGGGRGRGGRPGGPGGPGGPGGPGPRGGRGGRRGGTAGAFGRP. Positions 308 to 317 are enriched in basic residues; that stretch reads RRGRKSKRQK. Positions 430–602 constitute a tr-type G domain; the sequence is QRPPVVTVMG…VLLTADASLD (173 aa). A G1 region spans residues 439-446; that stretch reads GHVDHGKT. A GTP-binding site is contributed by 439 to 446; the sequence is GHVDHGKT. The segment at 464–468 is G2; sequence GITQH. The G3 stretch occupies residues 489-492; it reads DTPG. GTP-binding positions include 489–493 and 543–546; these read DTPGH and NKID. The G4 stretch occupies residues 543–546; that stretch reads NKID. The G5 stretch occupies residues 579-581; it reads SAK.

This sequence belongs to the TRAFAC class translation factor GTPase superfamily. Classic translation factor GTPase family. IF-2 subfamily.

The protein localises to the cytoplasm. Functionally, one of the essential components for the initiation of protein synthesis. Protects formylmethionyl-tRNA from spontaneous hydrolysis and promotes its binding to the 30S ribosomal subunits. Also involved in the hydrolysis of GTP during the formation of the 70S ribosomal complex. This Corynebacterium urealyticum (strain ATCC 43042 / DSM 7109) protein is Translation initiation factor IF-2.